The following is a 376-amino-acid chain: 23S rRNA (uracil(747)-C(5))-methyltransferase RlmC (376 aa).

The [4Fe-4S] cluster site is built by Cys-3, Cys-11, Cys-14, and Cys-88. S-adenosyl-L-methionine-binding residues include Gln-213, Phe-242, Glu-263, and Asn-308. Cys-335 (nucleophile) is an active-site residue.

It belongs to the class I-like SAM-binding methyltransferase superfamily. RNA M5U methyltransferase family. RlmC subfamily.

The catalysed reaction is uridine(747) in 23S rRNA + S-adenosyl-L-methionine = 5-methyluridine(747) in 23S rRNA + S-adenosyl-L-homocysteine + H(+). Catalyzes the formation of 5-methyl-uridine at position 747 (m5U747) in 23S rRNA. The protein is 23S rRNA (uracil(747)-C(5))-methyltransferase RlmC of Vibrio vulnificus (strain YJ016).